The primary structure comprises 59 residues: MKFSSIILLTLLICSMSIFGNCQIETNKKCQGGSCASVCRRVIGVAAGKCINGRCVCYP.

The signal sequence occupies residues 1 to 22; the sequence is MKFSSIILLTLLICSMSIFGNC. Q23 is modified (pyrrolidone carboxylic acid). 3 cysteine pairs are disulfide-bonded: C30/C50, C35/C55, and C39/C57.

As to expression, expressed by the venom gland.

It is found in the secreted. Its function is as follows. Blocker of A-type voltage-gated potassium channels of cerebellar granular cells. May also inhibit Kv4/KCND when coexpressed with DPP6 or DPP10. The occlusion of the outer entry of the K(+) conducting pore is partially reversible and affects both open and closed channels. It shares the same target in rat brain than BmTX3 (AC Q8I0L5) and AmmTX3 (AC P60208). This Androctonus australis (Sahara scorpion) protein is Potassium channel toxin alpha-KTx 15.4.